The sequence spans 629 residues: Smc-like protein Sph1 (629 aa).

Coiled coils occupy residues 139 to 282 and 318 to 487; these read LETE…LLDD and AETT…NQFD.

This sequence belongs to the Sph1/Sph2 family.

The protein resides in the cytoplasm. Functionally, may play a role in a late step of replication. This Halobacterium salinarum (strain ATCC 29341 / DSM 671 / R1) protein is Smc-like protein Sph1 (sph1).